Here is a 336-residue protein sequence, read N- to C-terminus: MSNYAAGLGKPGSGKRRIRDLLNQPDNRVCADCGASDPKWASANIGVFICLKCCGVHRSLGTHISKVLSVTLDEWSDEEVDSMIEIGGNASANSIYEAFLPDTCSKPGPDVNHDQRMRFIRAKYELQEFLKPSLRITSGKGSTKSSAFLTSSLSRKIMDSFRTNSSSQTMFQEGMVEFIGLLKVTIKKGTNLAIRDMMSSDPYVVLNLGKQKLQTTVMNSNLNPVWNQELMLSVPESYGPVKLQVYDYDTFSADDIMGEADIDIQPLITSAMAFGDPEMFGDMQIGKWLKSHDNPLIDDSIINIVDGKVKQEVQIKLQNVESGELELEMEWLPLDQ.

Positions 15-137 constitute an Arf-GAP domain; that stretch reads KRRIRDLLNQ…EFLKPSLRIT (123 aa). The C4-type zinc-finger motif lies at 30-53; sequence CADCGASDPKWASANIGVFICLKC. Residues 162 to 280 form the C2 domain; the sequence is RTNSSSQTMF…AMAFGDPEMF (119 aa). Residues Asp249, Ser252, and Asp255 each coordinate Ca(2+).

Ca(2+) is required as a cofactor.

Its function is as follows. GTPase-activating protein (GAP) for ADP ribosylation factor (ARF). This is Probable ADP-ribosylation factor GTPase-activating protein AGD13 (AGD13) from Arabidopsis thaliana (Mouse-ear cress).